We begin with the raw amino-acid sequence, 498 residues long: MLSNLLILPMLLPFLCALILVFLKNNDRISKYLYLGTMTITTIISLMLLIYVQRHRPITLDFGGWSAPFGIQFLGDSLSLIMVTTASFVITLIMAYGFGRGEHKANRYHLPSFILFLSVGVIGSFLTSDLFNLYVMFEIMLLASFVLITLGQSVEQLRAAIIYVVLNIIGSWLFLLGIGLLYKTVGTLNFSHIAMRLNDMGDNRTVTMISLIFLVAFSAKAALVLFMWLPKAYAVLNTELAALFAALMTKVGAYALIRFFTLLFDQHNDLIHPLLATMAAITMVIGAIGVIAYKDIKKIAAYQVIISIGFIILGLGTNTFAGINGAIFYLVNDIVVKTLLFFIIGSLVYITGYRQYQYLNGLAKKEPLFGVAFIIMIFAIGGVPPFSGFPGKVLIFQGALQNGNYIGLALMIITSLIAMYSLFRILFYMYFGDKDGEEVNFKKIPLYRKRILSILVVVVIAIGIAAPVVLNVTSDATELNTSDQLYQKLVNPHLKGED.

14 consecutive transmembrane segments (helical) span residues 2-22 (LSNL…ILVF), 32-52 (YLYL…LIYV), 78-98 (LSLI…AYGF), 108-128 (YHLP…FLTS), 130-150 (LFNL…LITL), 161-181 (IIYV…IGLL), 209-229 (ISLI…FMWL), 240-260 (LAAL…IRFF), 271-291 (IHPL…IGVI), 308-328 (IGFI…GAIF), 330-350 (LVND…LVYI), 369-389 (FGVA…FSGF), 403-423 (GNYI…YSLF), and 451-471 (ILSI…VVLN).

It belongs to the CPA3 antiporters (TC 2.A.63) subunit D family. May form a heterooligomeric complex that consists of seven subunits: mnhA2, mnhB2, mnhC2, mnhD2, mnhE2, mnhF2 and mnhG2.

Its subcellular location is the cell membrane. This is Putative antiporter subunit mnhD2 (mnhD2) from Staphylococcus aureus (strain JH1).